The following is a 44-amino-acid chain: Photosystem I reaction center subunit IX (44 aa).

The helical transmembrane segment at 7–27 threads the bilayer; the sequence is YLSVAPVLSTLWFGALAGLLI.

The protein belongs to the PsaJ family.

Its subcellular location is the plastid. It is found in the chloroplast thylakoid membrane. May help in the organization of the PsaE and PsaF subunits. The polypeptide is Photosystem I reaction center subunit IX (Solanum bulbocastanum (Wild potato)).